The following is an 873-amino-acid chain: Leucine--tRNA ligase (873 aa).

Residues 42–52 (PYPSGKLHMGH) carry the 'HIGH' region motif. Residues 624–643 (PVEIGGTEKMSKSKNNGVDP) are disordered. A 'KMSKS' region motif is present at residues 632 to 636 (KMSKS). Residue K635 coordinates ATP.

This sequence belongs to the class-I aminoacyl-tRNA synthetase family.

It localises to the cytoplasm. It catalyses the reaction tRNA(Leu) + L-leucine + ATP = L-leucyl-tRNA(Leu) + AMP + diphosphate. This chain is Leucine--tRNA ligase, found in Pseudomonas aeruginosa (strain ATCC 15692 / DSM 22644 / CIP 104116 / JCM 14847 / LMG 12228 / 1C / PRS 101 / PAO1).